Here is a 501-residue protein sequence, read N- to C-terminus: Lysine--tRNA ligase (501 aa).

Positions 402 and 409 each coordinate Mg(2+).

This sequence belongs to the class-II aminoacyl-tRNA synthetase family. Homodimer. The cofactor is Mg(2+).

Its subcellular location is the cytoplasm. The enzyme catalyses tRNA(Lys) + L-lysine + ATP = L-lysyl-tRNA(Lys) + AMP + diphosphate. The chain is Lysine--tRNA ligase from Helicobacter pylori (strain G27).